The chain runs to 333 residues: Large ribosomal subunit protein uL3 (333 aa).

This sequence belongs to the universal ribosomal protein uL3 family. As to quaternary structure, part of the 50S ribosomal subunit. Forms a cluster with proteins L14 and L24e.

One of the primary rRNA binding proteins, it binds directly near the 3'-end of the 23S rRNA, where it nucleates assembly of the 50S subunit. This Methanocorpusculum labreanum (strain ATCC 43576 / DSM 4855 / Z) protein is Large ribosomal subunit protein uL3.